A 1246-amino-acid chain; its full sequence is DNA-directed RNA polymerase subunit beta (1246 aa).

The interval 1171–1246 (IDDDAGEMSL…EFDGYNDFKA (76 aa)) is disordered. Acidic residues-rich tracts occupy residues 1202 to 1223 (DEEEKDEDNDSEEALITEEDFE) and 1230 to 1240 (EYAEDDDEFDG).

The protein belongs to the RNA polymerase beta chain family. The RNAP catalytic core consists of 2 alpha, 1 beta, 1 beta' and 1 omega subunit. When a sigma factor is associated with the core the holoenzyme is formed, which can initiate transcription.

The enzyme catalyses RNA(n) + a ribonucleoside 5'-triphosphate = RNA(n+1) + diphosphate. Its function is as follows. DNA-dependent RNA polymerase catalyzes the transcription of DNA into RNA using the four ribonucleoside triphosphates as substrates. The chain is DNA-directed RNA polymerase subunit beta from Alkaliphilus metalliredigens (strain QYMF).